The following is a 609-amino-acid chain: NADH-ubiquinone oxidoreductase chain 5 (609 aa).

Helical transmembrane passes span 3-23 (VINLFASSIITTLSMLTLPIV), 41-61 (TAISYAFMISMIPTTMFIYSG), 90-110 (MIFVPVALFVTWSIMEFSMWY), 115-135 (PFINRFFKYLLMFLITMMILV), 140-160 (LFQLFIGWEGVGIMSFLLIGW), 174-194 (AVLYNRIGDVGFIMAMAWFLI), 214-236 (VPLMGLLLAATGKSAQFGLHPWL), 244-264 (TPVSALLHSSTMVVAGVFLLI), 276-296 (MQTTTLCLGAITTLFTAICAL), 304-323 (IIAFSTSSQLGLMIVTIGIN), 328-350 (AFLHICTHAFFKAMLFLCSGSII), 368-388 (VLPFTTTSLIVGSLALTGMPF), 410-432 (WALLLTLVATSMTAAYSTRIMFF), 460-480 (LLLGSIFAGYLISYNITPTST), 491-511 (LMALTVTLLGFILALELNLTS), and 585-605 (GLIKLYFLSFIITLILALMMI).

This sequence belongs to the complex I subunit 5 family. In terms of assembly, core subunit of respiratory chain NADH dehydrogenase (Complex I) which is composed of 45 different subunits.

It localises to the mitochondrion inner membrane. The catalysed reaction is a ubiquinone + NADH + 5 H(+)(in) = a ubiquinol + NAD(+) + 4 H(+)(out). In terms of biological role, core subunit of the mitochondrial membrane respiratory chain NADH dehydrogenase (Complex I) which catalyzes electron transfer from NADH through the respiratory chain, using ubiquinone as an electron acceptor. Essential for the catalytic activity and assembly of complex I. This chain is NADH-ubiquinone oxidoreductase chain 5 (MT-ND5), found in Halichoerus grypus (Gray seal).